The primary structure comprises 485 residues: GlcNAc-binding protein A (485 aa).

A signal peptide spans 1–29 (MKKQPQKTLLAIALSVVSGTAMSHGYVSA). The Chitin-binding type-4 domain occupies 30 to 200 (VENGVAEARV…SFYNVIDVKF (171 aa)). Residues 437-478 (ADTKVLASDGAIYQCKPFPYSGYCVQWTPTATQYQPGTGSHW) enclose the Chitin-binding type-3 domain.

Belongs to the GbpA family.

The protein resides in the secreted. Its function is as follows. Probably interacts with GlcNAc residues. May promote attachment to both epithelial cell surfaces and chitin. The protein is GlcNAc-binding protein A of Vibrio vulnificus (strain CMCP6).